The following is a 533-amino-acid chain: 2-succinyl-5-enolpyruvyl-6-hydroxy-3-cyclohexene-1-carboxylate synthase (533 aa).

The protein belongs to the TPP enzyme family. MenD subfamily. Homodimer. The cofactor is Mg(2+). It depends on Mn(2+) as a cofactor. Thiamine diphosphate is required as a cofactor.

The enzyme catalyses isochorismate + 2-oxoglutarate + H(+) = 5-enolpyruvoyl-6-hydroxy-2-succinyl-cyclohex-3-ene-1-carboxylate + CO2. Its pathway is quinol/quinone metabolism; 1,4-dihydroxy-2-naphthoate biosynthesis; 1,4-dihydroxy-2-naphthoate from chorismate: step 2/7. It functions in the pathway quinol/quinone metabolism; menaquinone biosynthesis. Functionally, catalyzes the thiamine diphosphate-dependent decarboxylation of 2-oxoglutarate and the subsequent addition of the resulting succinic semialdehyde-thiamine pyrophosphate anion to isochorismate to yield 2-succinyl-5-enolpyruvyl-6-hydroxy-3-cyclohexene-1-carboxylate (SEPHCHC). This chain is 2-succinyl-5-enolpyruvyl-6-hydroxy-3-cyclohexene-1-carboxylate synthase, found in Akkermansia muciniphila (strain ATCC BAA-835 / DSM 22959 / JCM 33894 / BCRC 81048 / CCUG 64013 / CIP 107961 / Muc).